The sequence spans 33 residues: Thrombin-like enzyme RP34 (33 aa).

One can recognise a Peptidase S1 domain in the interval 1 to 33 (VIGGDEXDINEHRSLALMYXSWSHRFIXXGXLI).

This sequence belongs to the peptidase S1 family. Snake venom subfamily. In terms of assembly, homodimer. Expressed by the venom gland.

The protein resides in the secreted. The enzyme catalyses Selective cleavage of Arg-|-Xaa bond in fibrinogen, to form fibrin, and release fibrinopeptide A. The specificity of further degradation of fibrinogen varies with species origin of the enzyme.. Thrombin-like snake venom serine protease that displays clotting activity on fibrinogen. Shows both arginine-ester hydrolase and amidase activities on synthetic substrates. Also shows proteolytic activity toward casein. The protein is Thrombin-like enzyme RP34 of Cerastes cerastes (Horned desert viper).